A 393-amino-acid chain; its full sequence is Chalcone synthase DIII (393 aa).

Cys-164 is a catalytic residue.

This sequence belongs to the thiolase-like superfamily. Chalcone/stilbene synthases family.

It carries out the reaction (E)-4-coumaroyl-CoA + 3 malonyl-CoA + 3 H(+) = 2',4,4',6'-tetrahydroxychalcone + 3 CO2 + 4 CoA. The protein operates within secondary metabolite biosynthesis; flavonoid biosynthesis. Functionally, the primary product of this enzyme is 4,2',4',6'-tetrahydroxychalcone (also termed naringenin-chalcone or chalcone) which can under specific conditions spontaneously isomerize into naringenin. This is Chalcone synthase DIII (CHS-DIII) from Ipomoea batatas (Sweet potato).